A 179-amino-acid polypeptide reads, in one-letter code: Large ribosomal subunit protein uL5 (179 aa).

It belongs to the universal ribosomal protein uL5 family. Part of the 50S ribosomal subunit; part of the 5S rRNA/L5/L18/L25 subcomplex. Contacts the 5S rRNA and the P site tRNA. Forms a bridge to the 30S subunit in the 70S ribosome.

Its function is as follows. This is one of the proteins that bind and probably mediate the attachment of the 5S RNA into the large ribosomal subunit, where it forms part of the central protuberance. In the 70S ribosome it contacts protein S13 of the 30S subunit (bridge B1b), connecting the 2 subunits; this bridge is implicated in subunit movement. Contacts the P site tRNA; the 5S rRNA and some of its associated proteins might help stabilize positioning of ribosome-bound tRNAs. This is Large ribosomal subunit protein uL5 from Bdellovibrio bacteriovorus (strain ATCC 15356 / DSM 50701 / NCIMB 9529 / HD100).